We begin with the raw amino-acid sequence, 473 residues long: Pre-mRNA-splicing factor PRP46 (473 aa).

The span at 1 to 14 (MSTSLETPSGTSAG) shows a compositional bias: polar residues. 2 disordered regions span residues 1–21 (MSTS…VASG) and 103–126 (GPNV…QAVA). WD repeat units follow at residues 180–219 (GHMG…LKLS), 222–261 (GHIS…VIRH), 264–303 (GHFS…NIFT), 306–347 (GHTS…NTLT), 349–388 (HKKS…FVNN), 391–429 (GHEA…PFQH), and 440–473 (DAEA…SEQA).

Belongs to the WD repeat PRL1/PRL2 family. In terms of assembly, associated with the spliceosome.

The protein resides in the cytoplasm. Its subcellular location is the nucleus. In terms of biological role, involved in pre-mRNA splicing and required for cell cycle progression at G2/M. In Cryptococcus neoformans var. neoformans serotype D (strain B-3501A) (Filobasidiella neoformans), this protein is Pre-mRNA-splicing factor PRP46 (PRP46).